The primary structure comprises 751 residues: WD repeat-containing protein 91 (751 aa).

A coiled-coil region spans residues 183 to 205 (QKIACLQEENEIMRQKLFALQAE). The interval 237-398 (ELGSNIMSSH…GARKEEKPAQ (162 aa)) is disordered. Residues 238–267 (LGSNIMSSHSNTNMNTPSQRTSGFLSSLLA) show a composition bias toward polar residues. The span at 356 to 373 (TEKKAENSDADPDLRSDT) shows a compositional bias: basic and acidic residues. WD repeat units follow at residues 410–449 (EHHS…QTKA), 452–492 (ISKS…NLCE), 517–559 (SAAA…QQLQ), 564–603 (PVPI…CALS), 606–645 (AHMG…QKVS), 668–706 (VQFP…STLE), and 713–751 (GHRA…AQKS).

It belongs to the WD repeat WDR91 family.

It localises to the early endosome membrane. The protein resides in the late endosome membrane. In terms of biological role, functions as a negative regulator of the PI3 kinase/PI3K activity associated with endosomal membranes. By modifying the phosphatidylinositol 3-phosphate/PtdInsP3 content of endosomal membranes may regulate endosome fusion, recycling, sorting and early to late endosome transport. The sequence is that of WD repeat-containing protein 91 from Xenopus tropicalis (Western clawed frog).